Consider the following 369-residue polypeptide: Endo-1,4-beta-xylanase A (369 aa).

Positions 1–20 (MRKLTQFCLGLMLLPIAAVA) are cleaved as a signal peptide. Residues 21-367 (QNQPTMKDVL…KPVVKEIIKL (347 aa)) form the GH10 domain. The active-site Proton donor is E156. The active-site Nucleophile is the E261.

This sequence belongs to the glycosyl hydrolase 10 (cellulase F) family.

The enzyme catalyses Endohydrolysis of (1-&gt;4)-beta-D-xylosidic linkages in xylans.. Its pathway is glycan degradation; xylan degradation. The protein is Endo-1,4-beta-xylanase A (xynA) of Xylanibacter ruminicola (Prevotella ruminicola).